A 475-amino-acid chain; its full sequence is UDP-glucosyltransferase UGT13248 (475 aa).

Over residues 1–17 the composition is skewed to low complexity; the sequence is METTVTAVSGTTSSSVG. The disordered stretch occupies residues 1-20; that stretch reads METTVTAVSGTTSSSVGHGA. Residues histidine 38, serine 152, threonine 299, cysteine 352, 369-377, and 393-394 contribute to the UDP-alpha-D-glucose site; these read HCGWNSTLE and DQ.

This sequence belongs to the UDP-glycosyltransferase family.

Its function is as follows. Involved in the detoxification of the Fusarium mycotoxin deoxynivalenol by the transfer of glucose from UDP-D-glucose to the hydroxyl group at C-3, forming deoxynivalenol-3-O-beta-D-glucoside. This is UDP-glucosyltransferase UGT13248 from Hordeum vulgare subsp. vulgare (Domesticated barley).